Consider the following 424-residue polypeptide: Dihydroorotase (424 aa).

Zn(2+) contacts are provided by His61 and His63. Residues 63–65 (HLR) and Asn95 each bind substrate. Residues Asp153, His180, and His233 each coordinate Zn(2+). Asn279 serves as a coordination point for substrate. Asp306 is a Zn(2+) binding site. Asp306 is an active-site residue. His310 contacts substrate.

This sequence belongs to the metallo-dependent hydrolases superfamily. DHOase family. Class I DHOase subfamily. Zn(2+) serves as cofactor.

It carries out the reaction (S)-dihydroorotate + H2O = N-carbamoyl-L-aspartate + H(+). It functions in the pathway pyrimidine metabolism; UMP biosynthesis via de novo pathway; (S)-dihydroorotate from bicarbonate: step 3/3. Functionally, catalyzes the reversible cyclization of carbamoyl aspartate to dihydroorotate. In Pelobacter propionicus (strain DSM 2379 / NBRC 103807 / OttBd1), this protein is Dihydroorotase.